The sequence spans 638 residues: MIIFSNLSLKRGQTELLENASATINPKQKVGLVGKNGCGKSSLFALLKKELMPEGGEVNYPANWRVSWVNQETPALDISAIDYVIQGDREYCRLQQKLERANERNDGNAIARIHGQLETLDAWTIQSRAASLLHGLGFSQEETIQPVKAFSGGWRMRLNLAQALLCPSDLLLLDEPTNHLDLDAVIWLERWLVQYQGTLVLISHDRDFLDPIVTKILHIENQKLNEYTGDYSSFEVQRATKLAQQTAMYRQQQQKISHLQKYIDRFKAKATKAKQAQSRMKALERMELIAPAYVDNPFTFEFRPPQSLPNPLVMIEQASAGYGIGESAVEILSKIKLNLVPGSRIGLLGKNGAGKSTLIKLLAGELTALSGTVQLAKGVQLGYFAQHQLDTLRADESALWHMQKLAPEQTEQQVRDYLGSFAFHGDKVNQAVKSFSGGEKARLVLALIVWQRPNLLLLDEPTNHLDLDMRQALTEALVDYEGSLVVVSHDRHLLRNTVEEFYLVHDKKVEEFKGDLEDYQKWLSEQNSTSENKVSEKVGDNENSVQNRKEQKRREAELRQQTAPLRKKITQLEEKMNKFSSELANIENQLADTELYNAENKEKLTALLAQQVDVKKALDDVETEWMTAQEELEEMLQA.

ABC transporter domains follow at residues 2–246 and 313–531; these read IIFS…AQQT and VMIE…STSE. Residues 34 to 41 and 349 to 356 contribute to the ATP site; these read GKNGCGKS and GKNGAGKS. The interval 525-563 is disordered; the sequence is EQNSTSENKVSEKVGDNENSVQNRKEQKRREAELRQQTA. Residues 547 to 558 are compositionally biased toward basic and acidic residues; sequence NRKEQKRREAEL.

Belongs to the ABC transporter superfamily. ABCF family. YheS subfamily.

Genetic data indicate it may be involved in ribosome assembly or function. This Haemophilus influenzae (strain ATCC 51907 / DSM 11121 / KW20 / Rd) protein is Probable ATP-binding protein YheS.